Reading from the N-terminus, the 1431-residue chain is Trophinin (1431 aa).

Disordered stretches follow at residues 1 to 24, 341 to 365, and 401 to 433; these read MDRR…PGSL, SRAR…QGAQ, and PTTR…PWGR. Over residues 405 to 415 the composition is skewed to basic residues; the sequence is TRGKRNRKSKH. The region spanning 444-642 is the MAGE domain; it reads LQERANKLVK…KDWAVQYREA (199 aa). Repeat copies occupy residues 751 to 760 and 769 to 778. A 62 X 10 AA approximate tandem repeats region spans residues 751 to 1430; sequence FSGGPGITFG…ASLGACGFSY (680 aa). The 3; approximate repeat unit spans residues 779-786; that stretch reads GTLSTSSS. 2 consecutive repeat copies span residues 787-796 and 805-814. A 6; approximate repeat occupies 823–833; the sequence is FSGGVSSSFSG. The stretch at 841 to 850 is repeat 7; the sequence is FSGGASSGFG. The stretch at 859–870 is one 8; approximate repeat; it reads FSGVLSTSTSFG. Residues 879-890 form a 9; approximate repeat; the sequence is FSSALSTSTGFG. A run of 5 repeats spans residues 901 to 910, 911 to 920, 921 to 930, 931 to 940, and 941 to 950. Residues 951–960 form a 15; approximate repeat; the sequence is GTLSTSICFD. 6 tandem repeats follow at residues 961–970, 971–980, 981–990, 991–1000, 1001–1010, and 1011–1020. The stretch at 1021–1030 is one 22; approximate repeat; that stretch reads SALNTNAGYG. Repeat copies occupy residues 1031–1040, 1041–1050, 1051–1060, and 1061–1070. The 27; approximate repeat unit spans residues 1071 to 1080; that stretch reads CAVSTSASFS. Residues 1081 to 1090 form a 28; approximate repeat; the sequence is GAVSTSACFS. 8 repeat units span residues 1091 to 1100, 1101 to 1110, 1111 to 1120, 1121 to 1130, 1131 to 1140, 1141 to 1150, 1151 to 1160, and 1161 to 1170. The 37; approximate repeat unit spans residues 1171–1180; it reads GPPSTSACFS. One copy of the 38; approximate repeat lies at 1181–1190; the sequence is GATSPSFCDG. 3 repeat units span residues 1191–1200, 1201–1210, and 1211–1220. The 42; approximate repeat unit spans residues 1221–1230; that stretch reads GGLGTSAGFS. Residues 1231–1240 form a 43; approximate repeat; sequence GGLSTSSGFD. 2 consecutive repeat copies span residues 1241-1250 and 1251-1260. The stretch at 1261-1270 is one 46; approximate repeat; it reads GGLGTSAGFS. Repeat copies occupy residues 1271–1280, 1281–1290, and 1291–1300. A 50; approximate repeat occupies 1301-1310; sequence STLGTSAGFS. Residues 1311 to 1320 form repeat 51; sequence GGLSTSDGFG. One copy of the 52; approximate repeat lies at 1321–1330; sequence SRPNASFDRG. A 53; approximate repeat occupies 1331–1340; sequence LSTIIGFGSG. The 54; approximate repeat unit spans residues 1341-1350; it reads SNTSTGFTGE. Over residues 1342–1363 the composition is skewed to low complexity; that stretch reads NTSTGFTGEPSTSTGFSSGPSS. Residues 1342–1365 form a disordered region; that stretch reads NTSTGFTGEPSTSTGFSSGPSSIV. The stretch at 1351-1360 is one 55; approximate repeat; sequence PSTSTGFSSG. One copy of the 56; approximate repeat lies at 1361–1370; that stretch reads PSSIVGFSGG. The stretch at 1371–1380 is one 57; approximate repeat; that stretch reads PSTGVGFCSG. Residues 1381-1390 form a 58; approximate repeat; it reads PSTSGFSGGP. Residues 1391 to 1400 form a 59; approximate repeat; it reads STGAGFGGGP. A 60; approximate repeat occupies 1401–1410; it reads NTGAGFGGGP. A 61; approximate repeat occupies 1411–1420; the sequence is STSAGFGSGA. One copy of the 62; approximate repeat lies at 1421-1430; the sequence is ASLGACGFSY.

In terms of assembly, directly binds bystin, and indirectly tastin. Strong expression at implantation sites. Found in the placenta from the sixth week of pregnancy. Was localized in the cytoplasm of the syncytiotrophoblast in the chorionic villi and in endometrial decidual cells at the uteroplacental interface. After week 10, the level decreased and then disappeared from placental villi. Also found in macrophages.

Functionally, could be involved with bystin and tastin in a cell adhesion molecule complex that mediates an initial attachment of the blastocyst to uterine epithelial cells at the time of the embryo implantation. Directly responsible for homophilic cell adhesion. The protein is Trophinin (TRO) of Homo sapiens (Human).